A 95-amino-acid polypeptide reads, in one-letter code: Co-chaperonin GroES (95 aa).

The protein belongs to the GroES chaperonin family. In terms of assembly, heptamer of 7 subunits arranged in a ring. Interacts with the chaperonin GroEL.

The protein localises to the cytoplasm. Functionally, together with the chaperonin GroEL, plays an essential role in assisting protein folding. The GroEL-GroES system forms a nano-cage that allows encapsulation of the non-native substrate proteins and provides a physical environment optimized to promote and accelerate protein folding. GroES binds to the apical surface of the GroEL ring, thereby capping the opening of the GroEL channel. In Streptococcus salivarius, this protein is Co-chaperonin GroES.